Reading from the N-terminus, the 28-residue chain is Apolipoprotein C-I (28 aa).

It belongs to the apolipoprotein C1 family.

The protein localises to the secreted. In terms of biological role, inhibitor of lipoprotein binding to the low density lipoprotein (LDL) receptor, LDL receptor-related protein, and very low density lipoprotein (VLDL) receptor. Associates with high density lipoproteins (HDL) and the triacylglycerol-rich lipoproteins in the plasma and makes up about 10% of the protein of the VLDL and 2% of that of HDL. Appears to interfere directly with fatty acid uptake and is also the major plasma inhibitor of cholesteryl ester transfer protein (CETP). Binds free fatty acids and reduces their intracellular esterification. Modulates the interaction of APOE with beta-migrating VLDL and inhibits binding of beta-VLDL to the LDL receptor-related protein. The polypeptide is Apolipoprotein C-I (APOC1) (Oryctolagus cuniculus (Rabbit)).